A 512-amino-acid chain; its full sequence is 2,3-bisphosphoglycerate-independent phosphoglycerate mutase (512 aa).

Mn(2+) is bound by residues aspartate 11 and serine 61. Serine 61 functions as the Phosphoserine intermediate in the catalytic mechanism. Residues histidine 122, 152-153 (RD), arginine 184, arginine 190, 259-262 (RADR), and lysine 332 contribute to the substrate site. Aspartate 399, histidine 403, aspartate 440, histidine 441, and histidine 459 together coordinate Mn(2+).

Belongs to the BPG-independent phosphoglycerate mutase family. Monomer. Requires Mn(2+) as cofactor.

It catalyses the reaction (2R)-2-phosphoglycerate = (2R)-3-phosphoglycerate. It participates in carbohydrate degradation; glycolysis; pyruvate from D-glyceraldehyde 3-phosphate: step 3/5. Its function is as follows. Catalyzes the interconversion of 2-phosphoglycerate and 3-phosphoglycerate. The protein is 2,3-bisphosphoglycerate-independent phosphoglycerate mutase of Francisella tularensis subsp. tularensis (strain WY96-3418).